The chain runs to 1207 residues: Histidine kinase 1 (1207 aa).

Positions 1 to 10 (MRGDSFSMSI) are enriched in polar residues. Positions 1-20 (MRGDSFSMSIENLPDSPMGS) are disordered. Residues 1 to 81 (MRGDSFSMSI…SSYYSVFVVR (81 aa)) lie on the Cytoplasmic side of the membrane. The helical transmembrane segment at 82–102 (LAIMVMLAILIGLLTVLTWHF) threads the bilayer. Over 103-446 (TRIYTKQSLQ…GKVDERAFKT (344 aa)) the chain is Extracellular. A helical membrane pass occupies residues 447–467 (LIILISASVCIFFIGCVCILI). The Cytoplasmic segment spans residues 468–1207 (LTNGVSKEMK…PSAFQTSLSA (740 aa)). The Histidine kinase domain occupies 505–763 (NMSHELRTPM…LMRLYLILST (259 aa)). His-508 carries the post-translational modification Phosphohistidine; by autocatalysis. Disordered stretches follow at residues 964-987 (DTCS…VKPS) and 1000-1021 (DATT…PEEE). Positions 975 to 984 (SGEKQVDKSV) are enriched in basic and acidic residues. Over residues 1000–1014 (DATTSNDDSTSASMT) the composition is skewed to low complexity. The Response regulatory domain occupies 1045–1196 (RILLAEDTPV…LMVSTILSLT (152 aa)). Asp-1127 bears the 4-aspartylphosphate mark.

As to quaternary structure, interacts with AHP2, depending of the phosphorylation state of Asp-1075 in the receiver domain, but probably not with AHP1 and AHP3. Autophosphorylated predominantly on His residues. Activation probably requires a transfer of a phosphate group between a His in the transmitter domain and an Asp of the receiver domain. As to expression, mostly expressed in roots, and, to a lower extent, in stems, leaves and flowers.

The protein resides in the cell membrane. The enzyme catalyses ATP + protein L-histidine = ADP + protein N-phospho-L-histidine.. Its function is as follows. Functions as an osmosensor histidine kinase that detects water stress and transmits the stress signal to a downstream MAPK cascade. This protein undergoes an ATP-dependent autophosphorylation at a conserved histidine residue in the kinase core, and a phosphoryl group is then transferred to a conserved aspartate residue in the receiver domain. Positive regulator of drought and salt stress responses, and abscisic acid (ABA) signaling. Confers drought tolerance, probably by regulating levels of ABA accumulation. Plays a redundant role in regulating plant growth and development. Required for the regulation of desiccation processes during seed formation. This is Histidine kinase 1 (AHK1) from Arabidopsis thaliana (Mouse-ear cress).